The sequence spans 288 residues: Quinate/shikimate dehydrogenase (288 aa).

Residues lysine 71 and aspartate 107 each contribute to the substrate site. NAD(+) is bound by residues 132–135 (AGGA), 155–158 (NRRD), lysine 205, 232–235 (CVYN), and glycine 255.

This sequence belongs to the shikimate dehydrogenase family. Homodimer.

The enzyme catalyses L-quinate + NAD(+) = 3-dehydroquinate + NADH + H(+). It carries out the reaction L-quinate + NADP(+) = 3-dehydroquinate + NADPH + H(+). The catalysed reaction is shikimate + NADP(+) = 3-dehydroshikimate + NADPH + H(+). It catalyses the reaction shikimate + NAD(+) = 3-dehydroshikimate + NADH + H(+). Its pathway is metabolic intermediate biosynthesis; chorismate biosynthesis; chorismate from D-erythrose 4-phosphate and phosphoenolpyruvate: step 4/7. Functionally, the actual biological function of YdiB remains unclear, nor is it known whether 3-dehydroshikimate or quinate represents the natural substrate. Catalyzes the reversible NAD-dependent reduction of both 3-dehydroshikimate (DHSA) and 3-dehydroquinate to yield shikimate (SA) and quinate, respectively. It can use both NAD or NADP for catalysis, however it has higher catalytic efficiency with NAD. This chain is Quinate/shikimate dehydrogenase, found in Escherichia coli O7:K1 (strain IAI39 / ExPEC).